The primary structure comprises 616 residues: Chaperone protein HtpG (616 aa).

Residues 1–334 (MTIKQTHSFQ…TADLSLNLSR (334 aa)) are a; substrate-binding. The b stretch occupies residues 335–549 (EILQDNKVIK…ENEMGGNMER (215 aa)). The c stretch occupies residues 550-616 (IMKSLGQDIP…FVKRINKLIN (67 aa)).

This sequence belongs to the heat shock protein 90 family. As to quaternary structure, homodimer.

Its subcellular location is the cytoplasm. Molecular chaperone. Has ATPase activity. The sequence is that of Chaperone protein HtpG from Vesicomyosocius okutanii subsp. Calyptogena okutanii (strain HA).